A 213-amino-acid polypeptide reads, in one-letter code: Leucyl/phenylalanyl-tRNA--protein transferase (213 aa).

Belongs to the L/F-transferase family.

The protein resides in the cytoplasm. The enzyme catalyses N-terminal L-lysyl-[protein] + L-leucyl-tRNA(Leu) = N-terminal L-leucyl-L-lysyl-[protein] + tRNA(Leu) + H(+). It carries out the reaction N-terminal L-arginyl-[protein] + L-leucyl-tRNA(Leu) = N-terminal L-leucyl-L-arginyl-[protein] + tRNA(Leu) + H(+). It catalyses the reaction L-phenylalanyl-tRNA(Phe) + an N-terminal L-alpha-aminoacyl-[protein] = an N-terminal L-phenylalanyl-L-alpha-aminoacyl-[protein] + tRNA(Phe). Functionally, functions in the N-end rule pathway of protein degradation where it conjugates Leu, Phe and, less efficiently, Met from aminoacyl-tRNAs to the N-termini of proteins containing an N-terminal arginine or lysine. In Rhodospirillum rubrum (strain ATCC 11170 / ATH 1.1.1 / DSM 467 / LMG 4362 / NCIMB 8255 / S1), this protein is Leucyl/phenylalanyl-tRNA--protein transferase.